The following is a 195-amino-acid chain: Cytochrome c oxidase subunit 1 (195 aa).

Residues methionine 12–leucine 32 form a helical membrane-spanning segment. Mg(2+)-binding residues include histidine 42 and aspartate 43. Residue histidine 50 coordinates heme a3. Histidine 52 serves as a coordination point for Fe(II)-heme a. The next 3 membrane-spanning stretches (helical) occupy residues alanine 59–leucine 79, phenylalanine 88–alanine 108, and glycine 131–leucine 151.

This sequence belongs to the heme-copper respiratory oxidase family. Component of the cytochrome c oxidase (complex IV, CIV), a multisubunit enzyme composed of a catalytic core of 3 subunits and several supernumerary subunits. The complex exists as a monomer or a dimer and forms supercomplexes (SCs) in the inner mitochondrial membrane with ubiquinol-cytochrome c oxidoreductase (cytochrome b-c1 complex, complex III, CIII). Heme serves as cofactor. The cofactor is Cu cation.

It localises to the mitochondrion inner membrane. It carries out the reaction 4 Fe(II)-[cytochrome c] + O2 + 8 H(+)(in) = 4 Fe(III)-[cytochrome c] + 2 H2O + 4 H(+)(out). It participates in energy metabolism; oxidative phosphorylation. Functionally, component of the cytochrome c oxidase, the last enzyme in the mitochondrial electron transport chain which drives oxidative phosphorylation. The respiratory chain contains 3 multisubunit complexes succinate dehydrogenase (complex II, CII), ubiquinol-cytochrome c oxidoreductase (cytochrome b-c1 complex, complex III, CIII) and cytochrome c oxidase (complex IV, CIV), that cooperate to transfer electrons derived from NADH and succinate to molecular oxygen, creating an electrochemical gradient over the inner membrane that drives transmembrane transport and the ATP synthase. Cytochrome c oxidase is the component of the respiratory chain that catalyzes the reduction of oxygen to water. Electrons originating from reduced cytochrome c in the intermembrane space (IMS) are transferred via the dinuclear copper A center (CU(A)) of subunit 2 and heme A of subunit 1 to the active site in subunit 1, a binuclear center (BNC) formed by heme A3 and copper B (CU(B)). The BNC reduces molecular oxygen to 2 water molecules using 4 electrons from cytochrome c in the IMS and 4 protons from the mitochondrial matrix. In Albinaria turrita (Door snail), this protein is Cytochrome c oxidase subunit 1 (COI).